Reading from the N-terminus, the 560-residue chain is Membrane protein insertase YidC (560 aa).

Transmembrane regions (helical) follow at residues 5 to 25, 334 to 354, 357 to 377, 431 to 451, 476 to 496, and 522 to 542; these read IINL…WQYF, AIDF…MNFF, YVGN…LLMF, LPIL…YVTI, LFGL…WPIL, and FMPL…LIYW.

This sequence belongs to the OXA1/ALB3/YidC family. Type 1 subfamily. Interacts with the Sec translocase complex via SecD. Specifically interacts with transmembrane segments of nascent integral membrane proteins during membrane integration.

The protein localises to the cell inner membrane. Its function is as follows. Required for the insertion and/or proper folding and/or complex formation of integral membrane proteins into the membrane. Involved in integration of membrane proteins that insert both dependently and independently of the Sec translocase complex, as well as at least some lipoproteins. Aids folding of multispanning membrane proteins. This chain is Membrane protein insertase YidC, found in Rickettsia conorii (strain ATCC VR-613 / Malish 7).